The following is a 281-amino-acid chain: Pantothenate synthetase (281 aa).

30-37 lines the ATP pocket; sequence MGNLHQGH. His37 (proton donor) is an active-site residue. Gln61 lines the (R)-pantoate pocket. A beta-alanine-binding site is contributed by Gln61. 149-152 is an ATP binding site; the sequence is GNKD. Gln155 serves as a coordination point for (R)-pantoate. Residues Ile178 and 186–189 each bind ATP; that span reads MSSR.

This sequence belongs to the pantothenate synthetase family. As to quaternary structure, homodimer.

The protein resides in the cytoplasm. The catalysed reaction is (R)-pantoate + beta-alanine + ATP = (R)-pantothenate + AMP + diphosphate + H(+). Its pathway is cofactor biosynthesis; (R)-pantothenate biosynthesis; (R)-pantothenate from (R)-pantoate and beta-alanine: step 1/1. Functionally, catalyzes the condensation of pantoate with beta-alanine in an ATP-dependent reaction via a pantoyl-adenylate intermediate. In Shewanella baltica (strain OS223), this protein is Pantothenate synthetase.